The sequence spans 363 residues: 3-methyl-D-ornithine--L-lysine ligase (363 aa).

Lys-10 serves as a coordination point for ATP. 11 to 12 (LQ) contributes to the L-lysine binding site. ATP-binding positions include Asp-31, 49-50 (DV), and 72-73 (EN). Glu-72 is a binding site for L-lysine. ADP contacts are provided by residues Lys-104, Lys-131, Ser-138, and 160–163 (EEYV). D-ornithine-binding positions include 169–171 (SLE) and Asp-225. The Mg(2+) site is built by Glu-227, Glu-239, and Asp-241. An ADP-binding site is contributed by Glu-239. D-ornithine is bound by residues 243 to 248 (RFPSQT) and Glu-302. Positions 246 and 302 each coordinate L-lysine.

It belongs to the PylC family. It depends on Mg(2+) as a cofactor.

The enzyme catalyses (3R)-3-methyl-D-ornithine + L-lysine + ATP = (3R)-3-methyl-D-ornithyl-N(6)-L-lysine + ADP + phosphate + H(+). It functions in the pathway amino-acid biosynthesis; L-pyrrolysine biosynthesis. Its function is as follows. Is required for the biosynthesis of pyrrolysine. Catalyzes the ATP-dependent ligation between (3R)-3-methyl-D-ornithine and L-lysine, leading to (3R)-3-methyl-D-ornithyl-N6-L-lysine. This Methanosarcina barkeri (strain Fusaro / DSM 804) protein is 3-methyl-D-ornithine--L-lysine ligase.